A 201-amino-acid chain; its full sequence is Ribosome maturation factor RimP (201 aa).

The protein belongs to the RimP family.

Its subcellular location is the cytoplasm. Functionally, required for maturation of 30S ribosomal subunits. The sequence is that of Ribosome maturation factor RimP from Acidobacterium capsulatum (strain ATCC 51196 / DSM 11244 / BCRC 80197 / JCM 7670 / NBRC 15755 / NCIMB 13165 / 161).